Reading from the N-terminus, the 261-residue chain is Carbonic anhydrase 1 (261 aa).

The tract at residues 1–31 (MASPDWGYDDKNGPEQWSKLYPIANGNNQSP) is disordered. At A2 the chain carries N-acetylalanine. Residues 4–261 (PDWGYDDKNG…LKGRTVRASF (258 aa)) enclose the Alpha-carbonic anhydrase domain. The Proton donor/acceptor role is filled by H65. Zn(2+)-binding residues include H65, H68, H95, H97, and H120. Substrate contacts are provided by residues T200 and 200 to 201 (TH). H201 provides a ligand contact to Zn(2+). A disordered region spans residues 241–261 (PMQHNNRPTQPLKGRTVRASF).

Belongs to the alpha-carbonic anhydrase family. Zn(2+) is required as a cofactor.

Its subcellular location is the cytoplasm. The catalysed reaction is hydrogencarbonate + H(+) = CO2 + H2O. The enzyme catalyses urea = cyanamide + H2O. Activated by histamine, imidazole, L-adrenaline, L- and D-histidine, and L- and D-phenylalanine. Inhibited by coumarins, sulfonamide derivatives such as acetazolamide, benzenesulfonamide and derivatives (4-carboxyethylbenzene-sulfonamide, 4-carboxyethylbenzene-sulfonamide ethyl ester, 4-(acetyl-2-aminoethyl)benzene-sulfonamide, 4-aminoethylbenzene-sulfonamide), and 'prong inhibitors' BR15, BR17, BR22 and BR30. Activated by a short exposition to Foscarnet (phosphonoformate trisodium salt), but inhibited by a long one. Esterase activity weakly reduced by cyanamide. Catalyzes the reversible hydration of carbon dioxide. Can hydrate cyanamide to urea. This chain is Carbonic anhydrase 1 (CA1), found in Homo sapiens (Human).